Here is a 374-residue protein sequence, read N- to C-terminus: MGVKGLNQLIKEHAPEAFREFQLKNLFGRKVAIDASMCLYQYLIAVRQSDGQQLTSEDGETTSHLSGMFYRTIRLVENGIKPMYVFDGKPPVLKGGELEKRMIRKKEALKQQEDIKDTATVEEMVRYEKRSVRVTKEQNNEAKKLLELMGIPYVDAPCEAEAQCAELAVAGKVFAAASEDMDTLCYSPPYLLRHLTFAEARKMPIDQIDYKKAMEGLEMDKQTFIDLCILLGCDYCETIKGVGPVTAFKLIKEHGSLDNIVKWIEENPDSTKFKVPENWPYAEARELFLNPDVSPGKEINLKWQEPKVDELVEFMVKQKGFSEDRVRSGAEKLKKGLKGGVQGRLDGFFSVVKTEKRKPEQDKKTKGSKKAKKK.

An N-domain region spans residues 1–105 (MGVKGLNQLI…GELEKRMIRK (105 aa)). A Mg(2+)-binding site is contributed by D34. Residues R47 and R71 each contribute to the DNA site. D87, E159, E161, D180, and D182 together coordinate Mg(2+). Residues 123–254 (EMVRYEKRSV…VTAFKLIKEH (132 aa)) are I-domain. Residue E159 participates in DNA binding. DNA contacts are provided by G232 and D234. D234 serves as a coordination point for Mg(2+). The interaction with PCNA stretch occupies residues 341 to 349 (VQGRLDGFF). Positions 354-365 (TEKRKPEQDKKT) are enriched in basic and acidic residues. The disordered stretch occupies residues 354–374 (TEKRKPEQDKKTKGSKKAKKK).

The protein belongs to the XPG/RAD2 endonuclease family. FEN1 subfamily. As to quaternary structure, interacts with PCNA. Three molecules of FEN1 bind to one PCNA trimer with each molecule binding to one PCNA monomer. PCNA stimulates the nuclease activity without altering cleavage specificity. Mg(2+) serves as cofactor. In terms of processing, phosphorylated. Phosphorylation upon DNA damage induces relocalization to the nuclear plasma.

Its subcellular location is the nucleus. It localises to the nucleolus. The protein resides in the nucleoplasm. The protein localises to the mitochondrion. Functionally, structure-specific nuclease with 5'-flap endonuclease and 5'-3' exonuclease activities involved in DNA replication and repair. During DNA replication, cleaves the 5'-overhanging flap structure that is generated by displacement synthesis when DNA polymerase encounters the 5'-end of a downstream Okazaki fragment. It enters the flap from the 5'-end and then tracks to cleave the flap base, leaving a nick for ligation. Also involved in the long patch base excision repair (LP-BER) pathway, by cleaving within the apurinic/apyrimidinic (AP) site-terminated flap. Acts as a genome stabilization factor that prevents flaps from equilibrating into structures that lead to duplications and deletions. Also possesses 5'-3' exonuclease activity on nicked or gapped double-stranded DNA, and exhibits RNase H activity. Also involved in replication and repair of rDNA and in repairing mitochondrial DNA. The sequence is that of Flap endonuclease 1 from Meyerozyma guilliermondii (strain ATCC 6260 / CBS 566 / DSM 6381 / JCM 1539 / NBRC 10279 / NRRL Y-324) (Yeast).